Here is a 258-residue protein sequence, read N- to C-terminus: Probable phthiotriol/phenolphthiotriol dimycocerosates methyltransferase 2 (258 aa).

This sequence belongs to the methyltransferase superfamily. Phthiotriol/phenolphthiotriol dimycocerosates methyltransferase family.

Catalyzes the methylation of the lipid moiety of the intermediate compounds phthiotriol and glycosylated phenolphthiotriol dimycoserosates to form phthiocerol dimycocerosates (DIM A) and glycosylated phenolphthiocerol dimycocerosates (PGL). The sequence is that of Probable phthiotriol/phenolphthiotriol dimycocerosates methyltransferase 2 from Mycobacterium ulcerans (strain Agy99).